Reading from the N-terminus, the 943-residue chain is Conidiophore development regulator abaA (943 aa).

Disordered regions lie at residues 1–69 (MSSS…FNGG) and 111–133 (TSRQ…HQRG). The segment covering 29-43 (IDTRRSFHGDSRLPL) has biased composition (basic and acidic residues). Polar residues predominate over residues 59-68 (PSSAHSSFNG). The TEA DNA-binding region spans 161-254 (QKDKGGVWRR…QVVKKFFEDL (94 aa)). Over residues 537-555 (EHQRKKEKRSCGKKPDLER) the composition is skewed to basic and acidic residues. Disordered stretches follow at residues 537-575 (EHQR…AAWT) and 809-901 (GAAG…HHPG). The span at 865–889 (DSWTAGSSAGGAPAATPTGPDWGPT) shows a compositional bias: low complexity.

Belongs to the TEC1 family.

Its subcellular location is the nucleus. BrlA, abaA and wetA are pivotal regulators of conidiophore development and conidium maturation. They act individually and together to regulate their own expression and that of numerous other sporulation-specific genes. Binds to the sequence 5'-CATTCY-3', where Y is a pyrimidine, making both major- and minor-groove contacts. This chain is Conidiophore development regulator abaA, found in Hapsidospora chrysogena (Acremonium chrysogenum).